A 118-amino-acid polypeptide reads, in one-letter code: MEDFATRTYGTSGLDNRPLFGETSAKDRIINLVVGSLTSLLILVTLISAFVFPQLPPKPLNIFFAVCISLSSITACILIYWYRQGDLEPKFRKLIYYIIFSIIMLCICANLYFHDVGR.

Met1 carries the N-acetylmethionine modification. 3 consecutive transmembrane segments (helical) span residues 32-52, 62-82, and 94-114; these read LVVG…AFVF, IFFA…IYWY, and LIYY…LYFH.

The protein belongs to the TMEM243 family. As to expression, widely expressed.

Its subcellular location is the membrane. This chain is Transmembrane protein 243 (TMEM243), found in Homo sapiens (Human).